Consider the following 369-residue polypeptide: Sulfate permease 2, chloroplastic (369 aa).

A disordered region spans residues 1 to 21; the sequence is MASTTLLQPALGLPSRVGPRS. The transit peptide at 1–82 directs the protein to the chloroplast; it reads MASTTLLQPA…QQSRGDLLVS (82 aa). The next 5 membrane-spanning stretches (helical) occupy residues 110-130, 156-176, 187-207, 229-249, and 335-355; these read VGVA…NVFV, TLML…VAAI, VFLM…TGLM, VVFA…PFVV, and TEAA…TLWI. The ABC transmembrane type-1 domain occupies 153–356; it reads LKMTLMLAFV…ALALGTLWIK (204 aa).

Belongs to the ATP-binding cassette (ABC) (TC 3.A.1) superfamily. In terms of assembly, part of the chloroplast sulfate permease holocomplex. May form a heterodimer with SLUP1.

It is found in the plastid. The protein localises to the chloroplast membrane. In terms of biological role, part of the ABC-type chloroplast envelope-localized sulfate transporter. The sequence is that of Sulfate permease 2, chloroplastic (SULP2) from Chlamydomonas reinhardtii (Chlamydomonas smithii).